The following is a 249-amino-acid chain: 5'-nucleotidase SurE (249 aa).

The a divalent metal cation site is built by Asp8, Asp9, Ser39, and Asn91.

This sequence belongs to the SurE nucleotidase family. The cofactor is a divalent metal cation.

It is found in the cytoplasm. The enzyme catalyses a ribonucleoside 5'-phosphate + H2O = a ribonucleoside + phosphate. Nucleotidase that shows phosphatase activity on nucleoside 5'-monophosphates. The polypeptide is 5'-nucleotidase SurE (Haemophilus influenzae (strain PittGG)).